Reading from the N-terminus, the 177-residue chain is Large ribosomal subunit protein uL6 (177 aa).

This sequence belongs to the universal ribosomal protein uL6 family. Part of the 50S ribosomal subunit.

Functionally, this protein binds to the 23S rRNA, and is important in its secondary structure. It is located near the subunit interface in the base of the L7/L12 stalk, and near the tRNA binding site of the peptidyltransferase center. The chain is Large ribosomal subunit protein uL6 from Teredinibacter turnerae (strain ATCC 39867 / T7901).